Consider the following 150-residue polypeptide: UPF0756 membrane protein ABSDF1616 (150 aa).

4 helical membrane-spanning segments follow: residues 1–21, 45–65, 83–103, and 115–135; these read MLAQFDVNLVVLLVLLICGLL, FFPYIQAHGLNLGILILTIGV, FISFKSLVAIAIGLLVAWLGG, and VVAGLLIGTVAGVALLRGVPV.

It belongs to the UPF0756 family.

It localises to the cell membrane. The protein is UPF0756 membrane protein ABSDF1616 of Acinetobacter baumannii (strain SDF).